Reading from the N-terminus, the 504-residue chain is Xanthotoxol synthase (504 aa).

Residues 3–23 traverse the membrane as a helical segment; it reads PAAIFLILAIPIASVYLLFYH. The tract at residues 363-368 is substrate specificity; sequence PGPLLI. Residue C444 coordinates heme.

The protein belongs to the cytochrome P450 family. The cofactor is heme.

It localises to the microsome membrane. It catalyses the reaction psoralen + reduced [NADPH--hemoprotein reductase] + O2 = xanthotoxol + oxidized [NADPH--hemoprotein reductase] + H2O + H(+). The enzyme catalyses 6-methoxycoumarin + reduced [NADPH--hemoprotein reductase] + O2 = scopoletin + oxidized [NADPH--hemoprotein reductase] + H2O + H(+). It functions in the pathway secondary metabolite biosynthesis. Functionally, involved in the biosynthesis of coumarins and furanocoumarins (FCs), natural products required for defense responses against attacks by predators with potential medical and agroindustrial usages such as anticoagulant, rodenticide and artificial vanilla substitutes. Catalyzes the conversion of psoralen into xanthotoxol and of 6-methoxycoumarin into scopoletin. Can also convert with a lower efficiency scopoletin into fraxetin and 7-methoxycoumarin into daphnetin-7-methylether, and use 7-methoxy-3-methylcoumarin as substrate. The polypeptide is Xanthotoxol synthase (Pastinaca sativa (Wild parsnip)).